Here is a 139-residue protein sequence, read N- to C-terminus: Plasmid stability protein StbB (139 aa).

The PINc domain occupies Ile-2–Pro-136. Residues Asp-5 and Asp-104 each contribute to the Mg(2+) site.

This sequence belongs to the PINc/VapC protein family. Mg(2+) is required as a cofactor.

Its function is as follows. Toxic component of a type II toxin-antitoxin (TA) system. An RNase. Involved in plasmid stability. The sequence is that of Plasmid stability protein StbB (stbB) from Pseudomonas syringae pv. tomato (strain ATCC BAA-871 / DC3000).